A 637-amino-acid polypeptide reads, in one-letter code: 3D-(3,5/4)-trihydroxycyclohexane-1,2-dione hydrolase (637 aa).

Residue glutamate 65 coordinates thiamine diphosphate. Positions 441–521 (SLPGDLQRLW…INVLLFDNSG (81 aa)) are thiamine pyrophosphate binding. Residues aspartate 492 and asparagine 519 each coordinate Mg(2+).

This sequence belongs to the TPP enzyme family. Requires Mg(2+) as cofactor. It depends on thiamine diphosphate as a cofactor.

It catalyses the reaction 3D-3,5/4-trihydroxycyclohexane-1,2-dione + H2O = 5-deoxy-D-glucuronate + H(+). Its pathway is polyol metabolism; myo-inositol degradation into acetyl-CoA; acetyl-CoA from myo-inositol: step 3/7. Functionally, involved in the cleavage of the C1-C2 bond of 3D-(3,5/4)-trihydroxycyclohexane-1,2-dione (THcHDO) to yield 5-deoxy-glucuronate (5DG). The polypeptide is 3D-(3,5/4)-trihydroxycyclohexane-1,2-dione hydrolase (Halalkalibacterium halodurans (strain ATCC BAA-125 / DSM 18197 / FERM 7344 / JCM 9153 / C-125) (Bacillus halodurans)).